We begin with the raw amino-acid sequence, 83 residues long: Small ribosomal subunit protein bS16 (83 aa).

The protein belongs to the bacterial ribosomal protein bS16 family.

The protein is Small ribosomal subunit protein bS16 of Pseudomonas fluorescens (strain Pf0-1).